Here is a 302-residue protein sequence, read N- to C-terminus: Acetaldehyde dehydrogenase (302 aa).

12–15 (SGNI) serves as a coordination point for NAD(+). Cys-127 functions as the Acyl-thioester intermediate in the catalytic mechanism. Residues 158–166 (SAGPGTRQN) and Asn-276 contribute to the NAD(+) site.

Belongs to the acetaldehyde dehydrogenase family.

The catalysed reaction is acetaldehyde + NAD(+) + CoA = acetyl-CoA + NADH + H(+). The sequence is that of Acetaldehyde dehydrogenase (nahO) from Geobacillus genomosp. 3.